The following is a 433-amino-acid chain: Phosphomethylpyrimidine synthase (433 aa).

Residues Asn69, Met98, Tyr127, His163, 185–187, 226–229, and Glu265 contribute to the substrate site; these read SRG and DALR. Residue His269 coordinates Zn(2+). Tyr292 lines the substrate pocket. Position 333 (His333) interacts with Zn(2+). Positions 409, 412, and 416 each coordinate [4Fe-4S] cluster.

The protein belongs to the ThiC family. Requires [4Fe-4S] cluster as cofactor.

It catalyses the reaction 5-amino-1-(5-phospho-beta-D-ribosyl)imidazole + S-adenosyl-L-methionine = 4-amino-2-methyl-5-(phosphooxymethyl)pyrimidine + CO + 5'-deoxyadenosine + formate + L-methionine + 3 H(+). It functions in the pathway cofactor biosynthesis; thiamine diphosphate biosynthesis. Its function is as follows. Catalyzes the synthesis of the hydroxymethylpyrimidine phosphate (HMP-P) moiety of thiamine from aminoimidazole ribotide (AIR) in a radical S-adenosyl-L-methionine (SAM)-dependent reaction. The chain is Phosphomethylpyrimidine synthase from Finegoldia magna (strain ATCC 29328 / DSM 20472 / WAL 2508) (Peptostreptococcus magnus).